A 101-amino-acid chain; its full sequence is ATP synthase subunit c (101 aa).

A run of 2 helical transmembrane segments spans residues 28 to 48 (SVVA…VGMG) and 72 to 92 (MFIA…IALI).

Belongs to the ATPase C chain family. In terms of assembly, F-type ATPases have 2 components, F(1) - the catalytic core - and F(0) - the membrane proton channel. F(1) has five subunits: alpha(3), beta(3), gamma(1), delta(1), epsilon(1). F(0) has three main subunits: a(1), b(2) and c(10-14). The alpha and beta chains form an alternating ring which encloses part of the gamma chain. F(1) is attached to F(0) by a central stalk formed by the gamma and epsilon chains, while a peripheral stalk is formed by the delta and b chains.

It is found in the cell inner membrane. Functionally, f(1)F(0) ATP synthase produces ATP from ADP in the presence of a proton or sodium gradient. F-type ATPases consist of two structural domains, F(1) containing the extramembraneous catalytic core and F(0) containing the membrane proton channel, linked together by a central stalk and a peripheral stalk. During catalysis, ATP synthesis in the catalytic domain of F(1) is coupled via a rotary mechanism of the central stalk subunits to proton translocation. Its function is as follows. Key component of the F(0) channel; it plays a direct role in translocation across the membrane. A homomeric c-ring of between 10-14 subunits forms the central stalk rotor element with the F(1) delta and epsilon subunits. The chain is ATP synthase subunit c from Sulfurovum sp. (strain NBC37-1).